The following is a 396-amino-acid chain: Chalcone synthase B (396 aa).

The active site involves cysteine 170.

Belongs to the thiolase-like superfamily. Chalcone/stilbene synthases family.

The catalysed reaction is (E)-4-coumaroyl-CoA + 3 malonyl-CoA + 3 H(+) = 2',4,4',6'-tetrahydroxychalcone + 3 CO2 + 4 CoA. Its pathway is secondary metabolite biosynthesis; flavonoid biosynthesis. The primary product of this enzyme is 4,2',4',6'-tetrahydroxychalcone (also termed naringenin-chalcone or chalcone) which can under specific conditions spontaneously isomerize into naringenin. This chain is Chalcone synthase B (CHSB), found in Ipomoea purpurea (Common morning glory).